The chain runs to 438 residues: Aflatoxin cluster transcriptional coactivator aflS (438 aa).

The region spanning 65–134 is the HTH iclR-type domain; that stretch reads LALYNQLLAC…PSPGHVAHSV (70 aa). The segment at residues 95–114 is a DNA-binding region (H-T-H motif); the sequence is FEDVADIAGVPECRLRRLVR.

As to quaternary structure, interacts with aflR.

Its subcellular location is the nucleus. It is found in the endosome. In terms of biological role, transcription coactivator involved in regulation of the aflatoxin biosynthesis gene cluster with aflR. The ratio of the expression data between aflS:aflR plays a crucial role in the regulation of aflatoxins production. A high ratio, produced at a range between 17 and 30 degrees Celsius, corresponds with the production profile of aflatoxin G1 biosynthesis. A low ratio, produced over 30 degrees Celsius, is related to aflatoxin B1 biosynthesis. AflJ may act in aflR transport to or from the nucleus, thus controlling the availability of aflR for transcriptional activation of aflatoxin biosynthesis cluster genes. AflJ may also assist in directing endosomes to the cytoplasmic membrane for aflatoxin export. The chain is Aflatoxin cluster transcriptional coactivator aflS from Aspergillus parasiticus (strain ATCC 56775 / NRRL 5862 / SRRC 143 / SU-1).